The sequence spans 245 residues: 3-deoxy-manno-octulosonate cytidylyltransferase (245 aa).

This sequence belongs to the KdsB family.

The protein resides in the cytoplasm. It carries out the reaction 3-deoxy-alpha-D-manno-oct-2-ulosonate + CTP = CMP-3-deoxy-beta-D-manno-octulosonate + diphosphate. It functions in the pathway nucleotide-sugar biosynthesis; CMP-3-deoxy-D-manno-octulosonate biosynthesis; CMP-3-deoxy-D-manno-octulosonate from 3-deoxy-D-manno-octulosonate and CTP: step 1/1. Its pathway is bacterial outer membrane biogenesis; lipopolysaccharide biosynthesis. Activates KDO (a required 8-carbon sugar) for incorporation into bacterial lipopolysaccharide in Gram-negative bacteria. The chain is 3-deoxy-manno-octulosonate cytidylyltransferase from Acidobacterium capsulatum (strain ATCC 51196 / DSM 11244 / BCRC 80197 / JCM 7670 / NBRC 15755 / NCIMB 13165 / 161).